Reading from the N-terminus, the 161-residue chain is Nucleotide-binding protein Glov_3198 (161 aa).

Belongs to the YajQ family.

Nucleotide-binding protein. The sequence is that of Nucleotide-binding protein Glov_3198 from Trichlorobacter lovleyi (strain ATCC BAA-1151 / DSM 17278 / SZ) (Geobacter lovleyi).